A 246-amino-acid polypeptide reads, in one-letter code: Orotidine 5'-phosphate decarboxylase (246 aa).

Substrate is bound by residues Asp18, Lys39, 66 to 75, Thr130, Arg192, Gln201, Gly221, and Arg222; that span reads DLKFHDIPAT. Residue Lys68 is the Proton donor of the active site.

The protein belongs to the OMP decarboxylase family. Type 1 subfamily. As to quaternary structure, homodimer.

The enzyme catalyses orotidine 5'-phosphate + H(+) = UMP + CO2. It participates in pyrimidine metabolism; UMP biosynthesis via de novo pathway; UMP from orotate: step 2/2. Functionally, catalyzes the decarboxylation of orotidine 5'-monophosphate (OMP) to uridine 5'-monophosphate (UMP). In Parasynechococcus marenigrum (strain WH8102), this protein is Orotidine 5'-phosphate decarboxylase.